We begin with the raw amino-acid sequence, 944 residues long: Translation initiation factor IF-2 (944 aa).

2 disordered regions span residues 50 to 91 (SAKT…FAGK) and 114 to 349 (KVEV…VPAT). Basic and acidic residues-rich tracts occupy residues 75 to 86 (ESAKKNKEDHPR), 124 to 157 (VVTE…ETKD), 164 to 185 (AEVK…EKKK), and 199 to 233 (KRAE…DNRR). Residues 267 to 280 (SSGSAPATDSFTPA) are compositionally biased toward polar residues. Positions 286-307 (SRRDRDRKKSDNNRDNTKDGNR) are enriched in basic and acidic residues. Polar residues-rich tracts occupy residues 317–331 (NRNQ…NWNQ) and 338–348 (YQNNQSSSVPA). In terms of domain architecture, tr-type G spans 443 to 614 (ERPAVVTIMG…LLVAEVQELK (172 aa)). A G1 region spans residues 452–459 (GHVDHGKT). 452-459 (GHVDHGKT) provides a ligand contact to GTP. The interval 477-481 (GITQH) is G2. The interval 498 to 501 (DTPG) is G3. Residues 498–502 (DTPGH) and 552–555 (NKID) contribute to the GTP site. Positions 552–555 (NKID) are G4. A G5 region spans residues 590 to 592 (SAK).

This sequence belongs to the TRAFAC class translation factor GTPase superfamily. Classic translation factor GTPase family. IF-2 subfamily.

The protein resides in the cytoplasm. Its function is as follows. One of the essential components for the initiation of protein synthesis. Protects formylmethionyl-tRNA from spontaneous hydrolysis and promotes its binding to the 30S ribosomal subunits. Also involved in the hydrolysis of GTP during the formation of the 70S ribosomal complex. The sequence is that of Translation initiation factor IF-2 (infB) from Lactococcus lactis subsp. lactis (strain IL1403) (Streptococcus lactis).